A 252-amino-acid chain; its full sequence is Adenylate kinase (252 aa).

47-52 (GSGKGT) is a binding site for ATP. Residues 67-96 (ATGDMLRSQVKQGTPLGLEAKKIMDQGGLV) form an NMP region. AMP-binding positions include threonine 68, arginine 73, 94–96 (GLV), 123–126 (GFPR), and glutamine 130. The LID stretch occupies residues 164 to 201 (GRLVHPASGRSYHKIFSPPKKEMTDDITGEPLVQRSDD). ATP contacts are provided by residues arginine 165 and 174 to 175 (SY). Positions 198 and 209 each coordinate AMP. Glutamine 237 is an ATP binding site.

This sequence belongs to the adenylate kinase family. AK2 subfamily. Monomer.

The protein resides in the cytoplasm. It localises to the cytosol. It is found in the mitochondrion intermembrane space. The enzyme catalyses AMP + ATP = 2 ADP. Catalyzes the reversible transfer of the terminal phosphate group between ATP and AMP. Plays an important role in cellular energy homeostasis and in adenine nucleotide metabolism. Adenylate kinase activity is critical for regulation of the phosphate utilization and the AMP de novo biosynthesis pathways. The sequence is that of Adenylate kinase from Lodderomyces elongisporus (strain ATCC 11503 / CBS 2605 / JCM 1781 / NBRC 1676 / NRRL YB-4239) (Yeast).